The following is a 2873-amino-acid chain: MSSPRLIPLWKDLKLLLNDTINKSKQPSEDPKNCLIVLSDRSQAVAWMKSKTEDMVEKRTFSMTERLPPIQSMVHAGSFHILVVYCGDLILRLFGDHFRAFKPLGKVPCRFNISCLCYDPEMKMLLSGILGAVVTWVIELGGTGLQIAHMVSMPGDELVQDIVLNGPSGSLLALCETVVRVLMHQGKGQLGEVKRFTSTSSGSSITCCFTCFDQGFLYAGNQAGEIQVWSLQQGHPLHSFQAHQSGVICIRSRPEAHTLLTAGSDSLIKEWNLTSGSLLRRLELGEELYRLQFIDSITFFCQTAHSFSLHRLPCFYSLFNVCGSAPQQLRRVCCGNNWFRILCTTEDGLLRFVSPVTGDLLVITWPFSILDQAVDWAYDPGKEELFVATGSSEVLVFDTTRCPCPAKYLLGTSPNSQDFVQCLAYGHFNLGRGLEGLIFSGHQSGVIRVLSQHSCARLEKFMHFGAVLALSTLSGGIFGGQGNSLLCSYGMDDYVHLSEAVLDGVKVQLRPLASILSSCHLTHLILLPKSVGAITETNCLRLWKFHDFLSSGSQNGLKFIETLPLHLCAITSFDVCLSLSLFVTGSADGSVRIWDFHGRLIGILDSSLHFGPVCFANDRGDLLVTFNQSLYLVSCLKLLPPALLTRLSFMSISDEVLEVPKPFIPSFFFSFETMFVPKYIYPGQAQQKLVGLEKLVNNRAIAFDHSVPHVIEEDEEGSPVLLRSSMHYSLQDMEDWMQVSKRYQCHYVLPPQLQLTSWDGLNPYQILRYYFGHGREWLFAPDCYIPNSVIRARLWPEGTPIYLQCNLHAPQRELEWDRSQEFFFWHSRVRAISNTEYPKNKEEDEHFLEMRLSKDVTYSVLTDGANRSWLGRKMSEITINSMIETMLNIMVHASLLKYQCCVGALGQIFASYQVSPALRSETARRLLNDTTNSNPLIRELAWEGLKRLGMITHLFAMPLAQGLMDKDERVRIKTLSLMAEIGIHSRTSLLQLTQKQETFREMQQQMIGEEPLDHLLGMRATDLQILSTQVEQRLNENLTLSHRDEKPAFSLDVSMPSELKSSLKPPTVSEESEVAIKPSKGQRRGQAGVKKHSQKWLRGLKKTKERDSKQMSTEPGLLEDESGTEAAPIEMEEASVYSQWSSSTSVIKLSKDVDSQEKDISKDHIALTLKRLQKIRDKRDKKATAQKLKKKHKKKGKEAKVINEETTPPVMEQPVTKKVKIQGRGASGISGRRSTAGDGSSWRDDLCRLMALRISGSQTKMSENLNAELVTFAQEMLVDRHPSWELFQEICPLLKKESKVLLEDLDWDVVPPEKKPIFIQEGAIREDMIQGVTQEVIRHKEVMPREEEQAQKKARDMLGLEETQVILKKGKKVIFLEPGNVTMGKEISKKEEKKTFQKSPKQGRKAVQKERKVGKIKREMTKEERDMSEEVEEMATLEEKVVKQEGKLVMIERTPSWQDWKKAWDEWKQVHGETRKSWKAWKEEWEKRLLQEEEKLHQAGEKLSPEEEMLQEDKKLKWEEWKQVWENMLSSKSKEQQYKDEEEVTLEEEVSREGEEKEQQVTEEQRHIQEEHKWARIHRKRARAEKKRAQEERKLAQEEEKLAQEERQLAQEERKLAQAYVKITQDDREMAQAEGKFAQKEETLAQRGEKLSQEAEKLAQKRKKLAKKWEKVAREEEKLAKKGGKLAEVKNILAQKVEELPQREQNLDWQEKELAQELEELEWDMEELSWKEEELNQEEGKLVEEKKKLAEEEEALAWQREKLSEEETKLAQEEELLIQEKEKLAQHKEKMPEEEERLGRKREQLIEKKMKLAQKRERWINSMEELTKNKMILYQKKNLAQEKKNLAQEKEKLAQRKENLLYNKERLTHSKKQLVQVKNKLGMFNKILAQVEEKLTQEKETVIKKKEKLAETEKKLVQVEDSLAKKQEKLAQEKMKLALEKAMVQGKKRLRGELDIAKEEKALNLEMKRLAEEKMRLVEGKETLSKGETPETSRQRKMTQVEQELFERKLSLEEKILLHEDRILAMEESEIAKGKLEFTRGQRIFVQGQRKLAKASRKLIKKRESLSKEPAKLNKILKALQKLTRDERKLTQEEIKMTKMKRALFVKERRLSIEQSKLDIKEWDFSEKRSELTKDEKKLARKQRKLANKMRRMINKEEKMTEEESKLARKHSEVILDDEEEGGIEEEEVIPFLKRRWRKRKEAKRGDKPKEKFSSQVDEVESEEHFSEEMESLLDELEKQESLSSEEEEEREEEEEREEEEEREEEEERKEEEEGEEKQVEKEEEEKKKKKKEKKKEEVQEKEEVFEEKEEIMSEEETESLSDEEEEEESCSLEEEVDREKEILKKEKQFKLQEQRRKSLRGRERVLSILRGVPHGKGRAIRLGVLKSPLKKLMSTALEMKEKTPVPVPEKQISWEDKKATVVEIPRKFLGTMDKEREVMGKYEPIPPHVLGTVLESQAQDLKTPFMSHILRRTVEAEELQHKPLGAWWKWFLQHPPLMGQTEVQLPLSQIPAKEQHADVSLSDVEWIRHVLERMEAGEQLSRDGFHRLCQLLKDLASKGNLEWLHLAKHEAIVYRHRQALESQDTRISSRQSMSPKYLKVIPPIKAKEKESWPKPLAVPTQKSPLATKRIPDPRAKNWHLLGEPYRSERAQQISIAHKEMEMQYFYPATRDIFPSAHASVEKQTLALMFQKDFWDFKDKRRFPKLPKLEKKTQPISKKKEELPLWETFVALYHVLRMLQQRYPKDSTAWMEQFYQLMDLYQLKSPRIQKLLQELLMREEPQPQEIIYEEALKATELVPGERLFCCLFCGSSHTPRSPQEFQGAVPLPWQNCVRTILPVGIARYGILELAWKSLPEADLHLTKALTHTVAPTL.

7 WD repeats span residues 108–146, 199–239, 242–283, 368–407, 415–460, 516–553, and 565–604; these read PCRF…TGLQ, TSSG…PLHS, AHQS…RRLE, SILD…CPAK, NSQD…RLEK, LSSC…SSGS, and LHLC…IGIL. Disordered stretches follow at residues 1049–1124, 1177–1199, 1392–1413, 1531–1607, and 2199–2338; these read FSLD…ESGT, DKRD…GKEA, EKKT…ERKV, SKSK…QEER, and KRKE…EEVD. Composition is skewed to basic residues over residues 1089–1101 and 1187–1197; these read VKKH…RGLK and KLKKKHKKKGK. Over residues 1549–1574 the composition is skewed to basic and acidic residues; that stretch reads EVSREGEEKEQQVTEEQRHIQEEHKW. The segment covering 1575–1586 has biased composition (basic residues); sequence ARIHRKRARAEK. Basic and acidic residues-rich tracts occupy residues 1587-1607 and 2204-2213; these read KRAQ…QEER and KRGDKPKEKF. The segment covering 2244-2276 has biased composition (acidic residues); sequence SSEEEEEREEEEEREEEEEREEEEERKEEEEGE. The segment covering 2277–2287 has biased composition (basic and acidic residues); that stretch reads EKQVEKEEEEK. The span at 2304–2337 shows a compositional bias: acidic residues; that stretch reads EVFEEKEEIMSEEETESLSDEEEEEESCSLEEEV.

This is WD repeat-containing protein 87 (WDR87) from Homo sapiens (Human).